Consider the following 141-residue polypeptide: Nucleoside diphosphate kinase (141 aa).

Positions 11, 59, 87, 93, 104, and 114 each coordinate ATP. Residue H117 is the Pros-phosphohistidine intermediate of the active site.

This sequence belongs to the NDK family. In terms of assembly, homotetramer. The cofactor is Mg(2+).

It localises to the cytoplasm. It catalyses the reaction a 2'-deoxyribonucleoside 5'-diphosphate + ATP = a 2'-deoxyribonucleoside 5'-triphosphate + ADP. It carries out the reaction a ribonucleoside 5'-diphosphate + ATP = a ribonucleoside 5'-triphosphate + ADP. Its function is as follows. Major role in the synthesis of nucleoside triphosphates other than ATP. The ATP gamma phosphate is transferred to the NDP beta phosphate via a ping-pong mechanism, using a phosphorylated active-site intermediate. The protein is Nucleoside diphosphate kinase of Laribacter hongkongensis (strain HLHK9).